The chain runs to 321 residues: Glucokinase (321 aa).

Residue 8–13 (GDVGGT) participates in ATP binding.

It belongs to the bacterial glucokinase family.

The protein resides in the cytoplasm. It catalyses the reaction D-glucose + ATP = D-glucose 6-phosphate + ADP + H(+). The chain is Glucokinase from Cronobacter sakazakii (strain ATCC BAA-894) (Enterobacter sakazakii).